A 477-amino-acid polypeptide reads, in one-letter code: MKVTLPEFERAGVLVVGDVMLDRYWYGPTSRISPEAPVPVVKVENIEERPGGAANVAMNIASLGATSRLVGLTGIDDAARALSQALANVNVKCDFVSVPTHPTITKLRVLSRNQQLIRLDFEEGFSGVDPQPMHERIQQALGSIGALVLSDYAKGALTSVQTMIKLAREAGVPVLIDPKGTDFERYRGATLLTPNLSEFEAVVGKCQDEAEIVERGMKLIAEFELSALLVTRSEQGMTLLQPGRPPLHMPTQAQEVYDVTGAGDTVIGVLAATLASGNTLEEACYFANAAAGVVVGKLGTSTVSPVELENAVRGRAETGFGVMSEEELKQAVAAARKRGEKVVMTNGVFDILHAGHVSYLANARKLGDRLIVAVNSDASTKRLKGETRPVNPLEQRMIVLGALEAVDWVVSFEEDTPQRLIAGILPDLLVKGGDYKPEQIAGSEEVWANGGEVLVLNFEDGCSTTNIIKKIQKDSDK.

Residues M1–T318 form a ribokinase region. An ATP-binding site is contributed by N195–E198. The active site involves D264. Residues M344–K477 are cytidylyltransferase.

The protein in the N-terminal section; belongs to the carbohydrate kinase PfkB family. It in the C-terminal section; belongs to the cytidylyltransferase family. In terms of assembly, homodimer.

It carries out the reaction D-glycero-beta-D-manno-heptose 7-phosphate + ATP = D-glycero-beta-D-manno-heptose 1,7-bisphosphate + ADP + H(+). The enzyme catalyses D-glycero-beta-D-manno-heptose 1-phosphate + ATP + H(+) = ADP-D-glycero-beta-D-manno-heptose + diphosphate. It functions in the pathway nucleotide-sugar biosynthesis; ADP-L-glycero-beta-D-manno-heptose biosynthesis; ADP-L-glycero-beta-D-manno-heptose from D-glycero-beta-D-manno-heptose 7-phosphate: step 1/4. Its pathway is nucleotide-sugar biosynthesis; ADP-L-glycero-beta-D-manno-heptose biosynthesis; ADP-L-glycero-beta-D-manno-heptose from D-glycero-beta-D-manno-heptose 7-phosphate: step 3/4. Its function is as follows. Catalyzes the phosphorylation of D-glycero-D-manno-heptose 7-phosphate at the C-1 position to selectively form D-glycero-beta-D-manno-heptose-1,7-bisphosphate. In terms of biological role, catalyzes the ADP transfer from ATP to D-glycero-beta-D-manno-heptose 1-phosphate, yielding ADP-D-glycero-beta-D-manno-heptose. The polypeptide is Bifunctional protein HldE (Klebsiella pneumoniae (strain 342)).